The primary structure comprises 401 residues: MSRRLFTSESVTEGHPDKLADQISDALLDAFLAGDPTSRVAVETLLTTGHVHVAGEVTSSAHVDVTAVVRRTLTDIGYDAATGFDGATVGVLVSIGAQSPDIAQGVDKAYEARVEGGEDTLAQQGAGDQGIMFGYATDETPDLLPLPITLAHRLAQRLSKVRHDGLLPYLRPDGKTQVTIEYDGDRPVRLDTVVVSAHHAADVDLATRLVPDIRDQVIAPELKRLAEENLGLEVDGYRLLVNPTGRFEIGGPIGDAGLTGRKIIIDTYGGYARHGGGAFSGKDPSKVDRSAAYALRWVAKNVVAAGLARRAELQVAYAIGKAEPVGLFVETFGTETVPVPEIARAVSEVFDLRPAAIIRDLDLLRPIYGQTASYGHFGRTLPDFTWERTDRADALRAAVGR.

His15 is a binding site for ATP. Mg(2+) is bound at residue Asp17. Glu43 serves as a coordination point for K(+). The L-methionine site is built by Glu56 and Gln98. The interval 98–108 (QSPDIAQGVDK) is flexible loop. ATP-binding positions include 173 to 175 (DGK), 246 to 247 (RF), Asp255, 261 to 262 (RK), Ala278, and Lys282. Residue Asp255 participates in L-methionine binding. Lys286 serves as a coordination point for L-methionine.

Belongs to the AdoMet synthase family. In terms of assembly, homotetramer; dimer of dimers. Mg(2+) is required as a cofactor. It depends on K(+) as a cofactor.

The protein localises to the cytoplasm. It catalyses the reaction L-methionine + ATP + H2O = S-adenosyl-L-methionine + phosphate + diphosphate. It participates in amino-acid biosynthesis; S-adenosyl-L-methionine biosynthesis; S-adenosyl-L-methionine from L-methionine: step 1/1. Its function is as follows. Catalyzes the formation of S-adenosylmethionine (AdoMet) from methionine and ATP. The overall synthetic reaction is composed of two sequential steps, AdoMet formation and the subsequent tripolyphosphate hydrolysis which occurs prior to release of AdoMet from the enzyme. The chain is S-adenosylmethionine synthase 1 from Frankia casuarinae (strain DSM 45818 / CECT 9043 / HFP020203 / CcI3).